Consider the following 605-residue polypeptide: Elongation factor 4 (605 aa).

One can recognise a tr-type G domain in the interval 11–193 (KNIRNFSIIA…TLVDVIPAPT (183 aa)). GTP is bound by residues 23-28 (DHGKST) and 140-143 (NKID).

The protein belongs to the TRAFAC class translation factor GTPase superfamily. Classic translation factor GTPase family. LepA subfamily.

Its subcellular location is the cell inner membrane. The enzyme catalyses GTP + H2O = GDP + phosphate + H(+). Required for accurate and efficient protein synthesis under certain stress conditions. May act as a fidelity factor of the translation reaction, by catalyzing a one-codon backward translocation of tRNAs on improperly translocated ribosomes. Back-translocation proceeds from a post-translocation (POST) complex to a pre-translocation (PRE) complex, thus giving elongation factor G a second chance to translocate the tRNAs correctly. Binds to ribosomes in a GTP-dependent manner. The chain is Elongation factor 4 from Acinetobacter baumannii (strain SDF).